Here is a 105-residue protein sequence, read N- to C-terminus: uncharacterized protein (105 aa).

The next 2 membrane-spanning stretches (helical) occupy residues 7–26 and 30–52; these read VLSVISVFSAAALVYRWLSL and VDMTVIFFATLLIASLTLLLISI.

The protein resides in the cell membrane. This is an uncharacterized protein from Archaeoglobus fulgidus (strain ATCC 49558 / DSM 4304 / JCM 9628 / NBRC 100126 / VC-16).